The following is an 89-amino-acid chain: Small ribosomal subunit protein uS14 (89 aa).

The protein belongs to the universal ribosomal protein uS14 family. Part of the 30S ribosomal subunit. Contacts proteins S3 and S10.

Binds 16S rRNA, required for the assembly of 30S particles and may also be responsible for determining the conformation of the 16S rRNA at the A site. The polypeptide is Small ribosomal subunit protein uS14 (Deinococcus radiodurans (strain ATCC 13939 / DSM 20539 / JCM 16871 / CCUG 27074 / LMG 4051 / NBRC 15346 / NCIMB 9279 / VKM B-1422 / R1)).